We begin with the raw amino-acid sequence, 315 residues long: L-lactate dehydrogenase (315 aa).

Residues valine 17, aspartate 38, lysine 43, tyrosine 69, and 83-84 (GA) each bind NAD(+). Residues glutamine 86, arginine 92, and 124-127 (NPVD) contribute to the substrate site. NAD(+) contacts are provided by residues 122–124 (ATN) and serine 147. A substrate-binding site is contributed by 152-155 (DTAR). The beta-D-fructose 1,6-bisphosphate site is built by arginine 157 and histidine 172. Residue histidine 179 is the Proton acceptor of the active site. Position 224 is a phosphotyrosine (tyrosine 224). Threonine 233 contributes to the substrate binding site.

Belongs to the LDH/MDH superfamily. LDH family. As to quaternary structure, homotetramer.

It localises to the cytoplasm. The catalysed reaction is (S)-lactate + NAD(+) = pyruvate + NADH + H(+). Its pathway is fermentation; pyruvate fermentation to lactate; (S)-lactate from pyruvate: step 1/1. Its activity is regulated as follows. Allosterically activated by fructose 1,6-bisphosphate (FBP). Its function is as follows. Catalyzes the conversion of lactate to pyruvate. The sequence is that of L-lactate dehydrogenase from Bacillus pumilus (strain SAFR-032).